We begin with the raw amino-acid sequence, 646 residues long: Protein SENSITIVE TO UV 2 (646 aa).

A disordered region spans residues Pro-42–Gln-70. Over residues Thr-48–Gln-70 the composition is skewed to polar residues. A Nuclear localization signal motif is present at residues Asn-119–Lys-126. Positions Asp-123–Gly-157 form a coiled coil. The Phosphatase tensin-type domain occupies Lys-376–Ile-646.

Belongs to the serpin family. As to quaternary structure, forms multimers through the coiled-coil domain. Probably phosphorylated by ATR. As to expression, accumulates throughout the root tip.

The protein localises to the nucleus. It is found in the cytoplasm. Its function is as follows. Required for tolerance to DNA-damaging and cross-linking agents such as UVB irradiation, gamma-radiation, aphidicolin, ionizing radiation and hydroxyurea (HU), cisplatin (CDDP) and mitomycin C (MMC). Involved in cell-cycle G2/M arrest in response to DNA damage. Required for aluminum-dependent gene regulation and root growth inhibition in an ATR-dependent manner by halting cell cycle progression and triggering loss of the quiescent center (QC). The protein is Protein SENSITIVE TO UV 2 of Arabidopsis thaliana (Mouse-ear cress).